We begin with the raw amino-acid sequence, 251 residues long: Pyrroloquinoline-quinone synthase (251 aa).

It belongs to the PqqC family.

It carries out the reaction 6-(2-amino-2-carboxyethyl)-7,8-dioxo-1,2,3,4,7,8-hexahydroquinoline-2,4-dicarboxylate + 3 O2 = pyrroloquinoline quinone + 2 H2O2 + 2 H2O + H(+). It functions in the pathway cofactor biosynthesis; pyrroloquinoline quinone biosynthesis. Its function is as follows. Ring cyclization and eight-electron oxidation of 3a-(2-amino-2-carboxyethyl)-4,5-dioxo-4,5,6,7,8,9-hexahydroquinoline-7,9-dicarboxylic-acid to PQQ. This Pseudomonas syringae pv. syringae (strain B728a) protein is Pyrroloquinoline-quinone synthase.